The sequence spans 318 residues: Ethylene-responsive transcription factor FZP (318 aa).

The segment covering 1–15 (MNTRGSGSSSSSSSS) has biased composition (low complexity). 2 disordered regions span residues 1-59 (MNTR…GRFL) and 158-178 (SYGH…SGAS). Pro residues predominate over residues 25 to 37 (PPKPASQPSPPSS). The segment at residues 57–114 (RFLGVRRRPWGRYAAEIRDPTTKERHWLGTFDTAQEAALAYDRAALSMKGAQARTNFV) is a DNA-binding region (AP2/ERF). The span at 160–171 (GHHHHHHHHHGH) shows a compositional bias: basic residues.

It belongs to the AP2/ERF transcription factor family. ERF subfamily.

It is found in the nucleus. Functionally, required to prevent the formation of axillary meristems within the spikelet meristem and permit the subsequent establishment of floral meristem identity. Mediates the transition from spikelet to floret meristem. Determines the transition from panicle branching to spikelet formation. May specify floral organ identity by regulating the class B genes (Agamous-like genes) MADS6 and MADS17, as well as class E genes MADS1, MADS7 and MADS8 in floral meristem. Possesses transactivation activity. In Oryza sativa subsp. japonica (Rice), this protein is Ethylene-responsive transcription factor FZP.